The sequence spans 398 residues: Chalcone synthase (398 aa).

C167 is an active-site residue.

Belongs to the thiolase-like superfamily. Chalcone/stilbene synthases family.

The catalysed reaction is (E)-4-coumaroyl-CoA + 3 malonyl-CoA + 3 H(+) = 2',4,4',6'-tetrahydroxychalcone + 3 CO2 + 4 CoA. The protein operates within secondary metabolite biosynthesis; flavonoid biosynthesis. Its function is as follows. The primary product of this enzyme is 4,2',4',6'-tetrahydroxychalcone (also termed naringenin-chalcone or chalcone) which can under specific conditions spontaneously isomerize into naringenin. This is Chalcone synthase (CHS) from Callistephus chinensis (China aster).